A 344-amino-acid polypeptide reads, in one-letter code: Dihydroorotase (344 aa).

Zn(2+) is bound by residues H13 and H15. Substrate-binding positions include 15-17 and N41; that span reads HFR. Residues K98, H135, and H173 each contribute to the Zn(2+) site. The residue at position 98 (K98) is an N6-carboxylysine. Substrate is bound at residue H135. L218 provides a ligand contact to substrate. D246 serves as a coordination point for Zn(2+). D246 is a catalytic residue. 2 residues coordinate substrate: H250 and A262.

It belongs to the metallo-dependent hydrolases superfamily. DHOase family. Class II DHOase subfamily. Homodimer. Requires Zn(2+) as cofactor.

The catalysed reaction is (S)-dihydroorotate + H2O = N-carbamoyl-L-aspartate + H(+). Its pathway is pyrimidine metabolism; UMP biosynthesis via de novo pathway; (S)-dihydroorotate from bicarbonate: step 3/3. Functionally, catalyzes the reversible cyclization of carbamoyl aspartate to dihydroorotate. This is Dihydroorotase from Shewanella woodyi (strain ATCC 51908 / MS32).